The chain runs to 319 residues: Phospho-N-acetylmuramoyl-pentapeptide-transferase (319 aa).

A run of 10 helical transmembrane segments spans residues 1 to 21 (MSILVAGLTLVSAFLITFLLM), 53 to 73 (TMGGLLFILSAALTCGWVGAW), 77 to 97 (LNGTLGALLFTLIAYGLIGMW), 117 to 137 (FLAQVVGAMVFAVIYQHEGFQ), 140 to 160 (FGLTDWGWFYALFIIFWMVGF), 172 to 192 (GLVTGLATISFAAYLVLALVQ), 195 to 215 (TEVALFCLAMIGTLLGFFPFN), 221 to 241 (IFMGDMGSLALGASLAAVALV), 249 to 269 (LIIGIVYVLETLSVILQVAYF), and 298 to 318 (GVFWLVGLIAGALTVATILFL).

It belongs to the glycosyltransferase 4 family. MraY subfamily. The cofactor is Mg(2+).

It localises to the cell membrane. It carries out the reaction UDP-N-acetyl-alpha-D-muramoyl-L-alanyl-gamma-D-glutamyl-L-lysyl-D-alanyl-D-alanine + di-trans,octa-cis-undecaprenyl phosphate = Mur2Ac(oyl-L-Ala-gamma-D-Glu-L-Lys-D-Ala-D-Ala)-di-trans,octa-cis-undecaprenyl diphosphate + UMP. It functions in the pathway cell wall biogenesis; peptidoglycan biosynthesis. Functionally, catalyzes the initial step of the lipid cycle reactions in the biosynthesis of the cell wall peptidoglycan: transfers peptidoglycan precursor phospho-MurNAc-pentapeptide from UDP-MurNAc-pentapeptide onto the lipid carrier undecaprenyl phosphate, yielding undecaprenyl-pyrophosphoryl-MurNAc-pentapeptide, known as lipid I. The protein is Phospho-N-acetylmuramoyl-pentapeptide-transferase of Limosilactobacillus fermentum (strain NBRC 3956 / LMG 18251) (Lactobacillus fermentum).